Here is an 87-residue protein sequence, read N- to C-terminus: UPF0473 protein Daud_0916 (87 aa).

This sequence belongs to the UPF0473 family.

The protein is UPF0473 protein Daud_0916 of Desulforudis audaxviator (strain MP104C).